The sequence spans 238 residues: Purine nucleoside phosphorylase DeoD-type 1 (238 aa).

H5 is a binding site for a purine D-ribonucleoside. Residues G21, R25, R44, and 88–91 (RVGS) each bind phosphate. Residues 180-182 (EME) and 204-205 (SD) contribute to the a purine D-ribonucleoside site. D205 (proton donor) is an active-site residue.

This sequence belongs to the PNP/UDP phosphorylase family. As to quaternary structure, homohexamer; trimer of homodimers.

The enzyme catalyses a purine D-ribonucleoside + phosphate = a purine nucleobase + alpha-D-ribose 1-phosphate. The catalysed reaction is a purine 2'-deoxy-D-ribonucleoside + phosphate = a purine nucleobase + 2-deoxy-alpha-D-ribose 1-phosphate. Its function is as follows. Catalyzes the reversible phosphorolytic breakdown of the N-glycosidic bond in the beta-(deoxy)ribonucleoside molecules, with the formation of the corresponding free purine bases and pentose-1-phosphate. This is Purine nucleoside phosphorylase DeoD-type 1 from Aliivibrio fischeri (strain ATCC 700601 / ES114) (Vibrio fischeri).